The sequence spans 665 residues: Filensin (665 aa).

Residues 1–40 (MYRRSYVFQTRKEQYEHADEASRAAEPERPADEGWAGATS) form a head region. Ser5 is subject to Phosphoserine. An IF rod domain is found at 40 to 320 (SLAALQGLGE…RIIEIEGNRL (281 aa)). Positions 41–75 (LAALQGLGERVAAHVQRARALEQRHAGLRRQLDAF) are coil 1A. Ala42 bears the N-acetylalanine mark. Positions 76–84 (QRLGELAGP) are linker 1. The interval 85 to 184 (EDALARQVES…RHKKNLLEVQ (100 aa)) is coil 1B. The linker 12 stretch occupies residues 185 to 201 (TYISILQQIIHTTPPAS). The tract at residues 202–320 (IVTSGMREEK…RIIEIEGNRL (119 aa)) is coil 2. Positions 321-665 (TSAFIETPIP…DKKKSGEKSS (345 aa)) are tail. A phosphoserine mark is found at Ser341 and Ser420. 2 disordered regions span residues 410-439 (SKFE…QISK) and 506-614 (YDGQ…KGPP). The N-myristoyl glycine moiety is linked to residue Gly434. Ser513 bears the Phosphoserine mark. Positions 556–571 (PEEKREGEERDEESRR) are enriched in basic and acidic residues. At Ser665 the chain carries Phosphoserine.

Belongs to the intermediate filament family. Part of a complex required for lens intermediate filament formation composed of BFSP1, BFSP2 and CRYAA. Identified in a complex that contains VIM, EZR, AHNAK, BFSP1, BFSP2, ANK2, PLEC, PRX and spectrin. Found in a complex composed of PPL (via C-terminal linker domain), BFSP1 and BFSP2 in the retinal lens. Within the complex interacts with BFSP2. Interacts (via C-terminus) with MIP (via C-terminus) in aged lens fiber cells. Proteolytically cleaved during lens cell fiber differentiation with increased fragmentation as fiber cell age increases. Post-translationally, myristoylated at Gly-434 following proteolytic cleavage at Asp-433. In terms of processing, acetylated at Ala-42 following proteolytic cleavage at Leu-41. In terms of tissue distribution, expressed in the cortex and nucleus of the retina lens (at protein level).

It is found in the cell membrane. It localises to the cytoplasm. The protein resides in the cytoskeleton. The protein localises to the cell cortex. Its function is as follows. Required for the correct formation of lens intermediate filaments as part of a complex composed of BFSP1, BFSP2 and CRYAA. Involved in altering the calcium regulation of MIP water permeability. The protein is Filensin (BFSP1) of Homo sapiens (Human).